The primary structure comprises 230 residues: Secretory carrier-associated membrane protein 4 (230 aa).

The Cytoplasmic segment spans residues 1-39 (MSGKENNFPPLPKFIPLKPCFYQNFSDEIPIEHQVLVKR). The next 4 membrane-spanning stretches (helical) occupy residues 40–60 (IYRLWLFYCATLGVNLVACLA), 61–81 (WWIAGGSGANFGLALLWLLLF), 105–125 (FMAFFFIFGAQFILTIIQAVG), and 149–169 (VVMLLPAIMFSMSAAMMAVMI). The Cytoplasmic portion of the chain corresponds to 170–230 (MKVHSIYRGT…SYPASGGQWP (61 aa)). Residue T194 is modified to Phosphothreonine. Residues 208 to 230 (FSGNSLPEYPTVPSYPASGGQWP) form a disordered region.

Belongs to the SCAMP family.

It is found in the membrane. Its function is as follows. Probably involved in membrane protein trafficking. This Bos taurus (Bovine) protein is Secretory carrier-associated membrane protein 4 (SCAMP4).